The chain runs to 177 residues: MSDMTTIARPYAKAAFDFAVENGELAQWAEMLTFASEVVKNEAMQDILRSGFSADKLTEIIVSVCDEQLNEFGQNLLKVMAENGRLTMVPAVSDEFLFLKNEHEKTIEADVISAVVLEDSQLVAISQKLEQRLERKVKLNCSVDETLIAGVVIRAGDLVIDNSVRGKLNRLSDTLQS.

The protein belongs to the ATPase delta chain family. As to quaternary structure, F-type ATPases have 2 components, F(1) - the catalytic core - and F(0) - the membrane proton channel. F(1) has five subunits: alpha(3), beta(3), gamma(1), delta(1), epsilon(1). F(0) has three main subunits: a(1), b(2) and c(10-14). The alpha and beta chains form an alternating ring which encloses part of the gamma chain. F(1) is attached to F(0) by a central stalk formed by the gamma and epsilon chains, while a peripheral stalk is formed by the delta and b chains.

The protein resides in the cell inner membrane. Functionally, f(1)F(0) ATP synthase produces ATP from ADP in the presence of a proton or sodium gradient. F-type ATPases consist of two structural domains, F(1) containing the extramembraneous catalytic core and F(0) containing the membrane proton channel, linked together by a central stalk and a peripheral stalk. During catalysis, ATP synthesis in the catalytic domain of F(1) is coupled via a rotary mechanism of the central stalk subunits to proton translocation. This protein is part of the stalk that links CF(0) to CF(1). It either transmits conformational changes from CF(0) to CF(1) or is implicated in proton conduction. This is ATP synthase subunit delta 1 from Photobacterium profundum (strain SS9).